The chain runs to 376 residues: Succinyl-diaminopimelate desuccinylase (376 aa).

H67 is a Zn(2+) binding site. Residue D69 is part of the active site. Residue D100 participates in Zn(2+) binding. The active-site Proton acceptor is E134. Zn(2+) contacts are provided by E135, E163, and H349.

It belongs to the peptidase M20A family. DapE subfamily. Homodimer. It depends on Zn(2+) as a cofactor. The cofactor is Co(2+).

The catalysed reaction is N-succinyl-(2S,6S)-2,6-diaminopimelate + H2O = (2S,6S)-2,6-diaminopimelate + succinate. It participates in amino-acid biosynthesis; L-lysine biosynthesis via DAP pathway; LL-2,6-diaminopimelate from (S)-tetrahydrodipicolinate (succinylase route): step 3/3. Its function is as follows. Catalyzes the hydrolysis of N-succinyl-L,L-diaminopimelic acid (SDAP), forming succinate and LL-2,6-diaminopimelate (DAP), an intermediate involved in the bacterial biosynthesis of lysine and meso-diaminopimelic acid, an essential component of bacterial cell walls. In Nitrosomonas europaea (strain ATCC 19718 / CIP 103999 / KCTC 2705 / NBRC 14298), this protein is Succinyl-diaminopimelate desuccinylase.